The primary structure comprises 774 residues: Pentatricopeptide repeat-containing protein At4g20770 (774 aa).

20 PPR repeats span residues 5–39 (GNKYLASLLRCYRDERCKLSGKVIHGFIVRMGMKS), 40–70 (DTYLCNRLLDLYIECGDGDYARKVFDEMSVR), 71–101 (DVYSWNAFLTFRCKVGDLGEACEVFDGMPER), 102–136 (DVVSWNNMISVLVRKGFEEKALVVYKRMVCDGFLP), 137–171 (SRFTLASVLSACSKVLDGVFGMRCHGVAVKTGLDK), 172–203 (NIFVGNALLSMYAKCGFIVDYGVRVFESLSQP), 204–238 (NEVSYTAVIGGLARENKVLEAVQMFRLMCEKGVQV), 239–270 (DSVCLSNILSISAPREGCDSLSEIYGNELGKQ), 283–313 (DLHLNNSLLEIYAKNKDMNGAELIFAEMPEV), 314–348 (NVVSWNIMIVGFGQEYRSDKSVEFLTRMRDSGFQP), 349–379 (NEVTCISVLGACFRSGDVETGRRIFSSIPQP), 380–414 (SVSAWNAMLSGYSNYEHYEEAISNFRQMQFQNLKP), 415–449 (DKTTLSVILSSCARLRFLEGGKQIHGVVIRTEISK), 450–480 (NSHIVSGLIAVYSECEKMEISECIFDDCINE), 482–516 (DIACWNSMISGFRHNMLDTKALILFRRMHQTAVLC), 518–552 (NETSFATVLSSCSRLCSLLHGRQFHGLVVKSGYVS), 553–583 (DSFVETALTDMYCKCGEIDSARQFFDAVLRK), 584–618 (NTVIWNEMIHGYGHNGRGDEAVGLYRKMISSGEKP), 619–654 (DGITFVSVLTACSHSGLVETGLEILSSMQRIHGIEP), and 655–685 (ELDHYICIVDCLGRAGRLEDAEKLAEATPYK). The type E motif stretch occupies residues 690-765 (LWEILLSSCR…TPGQSWTTYG (76 aa)).

The protein belongs to the PPR family. PCMP-E subfamily.

The sequence is that of Pentatricopeptide repeat-containing protein At4g20770 (PCMP-E35) from Arabidopsis thaliana (Mouse-ear cress).